A 287-amino-acid polypeptide reads, in one-letter code: ATP synthase gamma chain (287 aa).

It belongs to the ATPase gamma chain family. F-type ATPases have 2 components, CF(1) - the catalytic core - and CF(0) - the membrane proton channel. CF(1) has five subunits: alpha(3), beta(3), gamma(1), delta(1), epsilon(1). CF(0) has three main subunits: a, b and c.

Its subcellular location is the cell inner membrane. Produces ATP from ADP in the presence of a proton gradient across the membrane. The gamma chain is believed to be important in regulating ATPase activity and the flow of protons through the CF(0) complex. The sequence is that of ATP synthase gamma chain from Yersinia enterocolitica serotype O:8 / biotype 1B (strain NCTC 13174 / 8081).